We begin with the raw amino-acid sequence, 264 residues long: Pro-opiomelanocortin (264 aa).

Positions 1 to 26 (MPRSCCSRSGALLLALLLQASMEVRG) are cleaved as a signal peptide. Phe-87 is modified (phenylalanine amide). Disordered stretches follow at residues 88 to 204 (GRRN…DLEH) and 219 to 238 (RMEH…GGFM). Asn-91 is a glycosylation site (N-linked (GlcNAc...) asparagine). 2 stretches are compositionally biased toward basic and acidic residues: residues 99–122 (QKRE…EPRG) and 130–142 (REGK…EHFR). The residue at position 131 (Glu-131) is a Glutamic acid 1-amide. N-acetylserine; in Corticotropin is present on Ser-135. Valine amide is present on Val-147. Phosphoserine is present on Ser-165. Over residues 172–186 (EFKRELTGQRPRAGD) the composition is skewed to basic and acidic residues. Low complexity predominate over residues 189-199 (DGPADDGAGPR). Basic and acidic residues predominate over residues 219-234 (RMEHFRWGSPPKDKRY).

Belongs to the POMC family. Specific enzymatic cleavages at paired basic residues yield the different active peptides. ACTH and MSH are produced by the pituitary gland.

Its subcellular location is the secreted. In terms of biological role, stimulates the adrenal glands to release cortisol. Its function is as follows. Anorexigenic peptide. Increases the pigmentation of skin by increasing melanin production in melanocytes. Increases the pigmentation of skin by increasing melanin production in melanocytes. Functionally, endogenous orexigenic opiate. In terms of biological role, endogenous opiate. In Macaca nemestrina (Pig-tailed macaque), this protein is Pro-opiomelanocortin (POMC).